The following is a 460-amino-acid chain: Inactive 7-epi-sesquithujene synthase (460 aa).

2 residues coordinate Mg(2+): Asp-308 and Asp-312. Residues Asp-308 and Asp-312 each contribute to the substrate site. Positions 308–312 (DDMFD) match the DDXXD motif motif.

Belongs to the terpene synthase family. As to quaternary structure, monomer. The cofactor is Mg(2+). Requires Mn(2+) as cofactor.

It localises to the cytoplasm. Its pathway is secondary metabolite biosynthesis; terpenoid biosynthesis. Non-functional sesquiterpene synthase due to a frameshift removing part of the catalytic site. This chain is Inactive 7-epi-sesquithujene synthase, found in Zea mays (Maize).